The following is a 199-amino-acid chain: Recombination protein RecR (199 aa).

The segment at 58–73 (CKKCFNLTSEEECEIC) adopts a C4-type zinc-finger fold. The 95-residue stretch at 81-175 (KIICVVAETK…KVTRIAYGLP (95 aa)) folds into the Toprim domain.

It belongs to the RecR family.

In terms of biological role, may play a role in DNA repair. It seems to be involved in an RecBC-independent recombinational process of DNA repair. It may act with RecF and RecO. The protein is Recombination protein RecR of Prochlorococcus marinus subsp. pastoris (strain CCMP1986 / NIES-2087 / MED4).